The chain runs to 230 residues: Modulator of macroautophagy TMEM150B-A (230 aa).

Position 1 (Met-1) is a topological domain, cytoplasmic. The chain crosses the membrane as a helical span at residues 2–22; the sequence is WAWALLPICLTIWATAGIWIV. Residues 23 to 50 lie on the Extracellular side of the membrane; that stretch reads YGMSVSNGSVNLSDGFPYISLCGTDPPQ. 2 N-linked (GlcNAc...) asparagine glycosylation sites follow: Asn-29 and Asn-33. The chain crosses the membrane as a helical span at residues 51–71; sequence SCVFGQVLNVGAMLGVWISAI. Residues 72 to 83 are Cytoplasmic-facing; it reads RFQQIRDYNCHS. A helical membrane pass occupies residues 84 to 104; that stretch reads VLNSVSLAMGILCALGTSIVG. Over 105–115 the chain is Extracellular; sequence NFQQSNQLETH. The helical transmembrane segment at 116-136 threads the bilayer; it reads LAGAFLAFVIGNIYFWMQTAL. Topologically, residues 137-150 are cytoplasmic; that stretch reads TYMVKPTHGGCYIG. A helical membrane pass occupies residues 151–171; sequence PIRFCLSVACTALIVLMAVFL. At 172 to 183 the chain is on the extracellular side; it reads KMNMKSISAICE. The chain crosses the membrane as a helical span at residues 184–204; that stretch reads WIVAMILFLLYGLFAVDFWHL. Over 205 to 230 the chain is Cytoplasmic; sequence DGHYFHVKKRTVIPNEMQVSTVTLSI.

The protein belongs to the DRAM/TMEM150 family.

It localises to the cell membrane. Its subcellular location is the endosome membrane. It is found in the cytoplasmic vesicle. The protein resides in the autophagosome membrane. In terms of biological role, modulator of macroautophagy that causes accumulation of autophagosomes under basal conditions and enhances autophagic flux. Represses cell death and promotes long-term clonogenic survival of cells grown in the absence of glucose in a macroautophagy-independent manner. May have some role in extracellular matrix engulfment or growth factor receptor recycling, both of which can modulate cell survival. The polypeptide is Modulator of macroautophagy TMEM150B-A (Xenopus laevis (African clawed frog)).